Reading from the N-terminus, the 477-residue chain is Pentatricopeptide repeat-containing protein At5g47360 (477 aa).

PPR repeat units follow at residues 129-163 (NVKT…NVCA), 164-198 (DTVA…GLYP), 199-233 (DVIT…DCVL), 234-264 (NSVT…MEKE), 273-307 (NAVT…GCMP), 308-343 (NRVT…GGVS), 344-378 (LSEC…GVRP), 379-413 (DGLA…DVKS), and 416-450 (DSDI…KMRL).

It belongs to the PPR family. P subfamily.

The polypeptide is Pentatricopeptide repeat-containing protein At5g47360 (Arabidopsis thaliana (Mouse-ear cress)).